The sequence spans 250 residues: Probable transcriptional regulatory protein tll0175 (250 aa).

The protein belongs to the TACO1 family.

The protein localises to the cytoplasm. The protein is Probable transcriptional regulatory protein tll0175 of Thermosynechococcus vestitus (strain NIES-2133 / IAM M-273 / BP-1).